We begin with the raw amino-acid sequence, 170 residues long: Myosin regulatory light chain 1 (170 aa).

The segment covering 1-13 has biased composition (basic residues); it reads MSKAAKKKSSKKR. A disordered region spans residues 1 to 22; the sequence is MSKAAKKKSSKKRSGSEAAQFD. EF-hand domains follow at residues 24–59 and 93–128; these read KTIQ…MGQI and DPEA…KRGE. Positions 37, 39, 41, and 48 each coordinate Ca(2+).

Myosin is a hexamer of 2 heavy chains and 4 light chains (two regulatory light chains and two essential light chains).

This is Myosin regulatory light chain 1 (mlc-1) from Caenorhabditis elegans.